The primary structure comprises 784 residues: PWWP domain-containing protein 2A (784 aa).

Disordered regions lie at residues 1-32 (MAAV…LGRL), 244-272 (KPVE…PEDV), 463-567 (AKEK…EMQD), and 605-654 (SSSA…SSKE). Residues 244 to 266 (KPVESIQEESKSFHEEPLVKSEE) are compositionally biased toward basic and acidic residues. Residues 536 to 556 (TRYSATRSAGETPSEIQSPSN) are compositionally biased toward polar residues. Positions 605 to 614 (SSSASVCSSD) are enriched in low complexity. In terms of domain architecture, PWWP spans 684 to 744 (VGDIVWAKIY…LSQLTPFLEN (61 aa)).

Its subcellular location is the nucleus. H2A.Z-specific chromatin binding protein which plays an important role in the neural crest cell differentiation and/or migration during early development and is essential for the development of the head and eye. Acts as an adapter between distinct nucleosome components (H3K36me3 or H2A.Z) and chromatin-modifying complexes, contributing to the regulation of the levels of histone acetylation at actively transcribed genes. This Xenopus tropicalis (Western clawed frog) protein is PWWP domain-containing protein 2A (pwwp2a).